The primary structure comprises 187 residues: Elongation factor P (187 aa).

This sequence belongs to the elongation factor P family.

It localises to the cytoplasm. It participates in protein biosynthesis; polypeptide chain elongation. Involved in peptide bond synthesis. Stimulates efficient translation and peptide-bond synthesis on native or reconstituted 70S ribosomes in vitro. Probably functions indirectly by altering the affinity of the ribosome for aminoacyl-tRNA, thus increasing their reactivity as acceptors for peptidyl transferase. This chain is Elongation factor P, found in Azobacteroides pseudotrichonymphae genomovar. CFP2.